Reading from the N-terminus, the 273-residue chain is Major prion protein homolog (273 aa).

The N-terminal stretch at 1–24 is a signal peptide; sequence MARLLTTCCLLALLLAACTDVALS. Residues 25-121 are disordered; it reads KKGKGKPSGG…QKPWKPPKTN (97 aa). 8 consecutive repeat copies span residues 42 to 47, 48 to 53, 54 to 59, 60 to 65, 66 to 71, 72 to 77, 78 to 83, and 84 to 89. The 8 X 6 AA tandem repeats of [HR]-[NQ]-P-G-Y-P stretch occupies residues 42-89; the sequence is RQPSYPRQPGYPHNPGYPHNPGYPHNPGYPHNPGYPHNPGYPQNPGYP. The span at 51 to 94 shows a compositional bias: low complexity; the sequence is GYPHNPGYPHNPGYPHNPGYPHNPGYPHNPGYPQNPGYPHNPGY. Cu(2+) is bound by residues H66, H72, and H78. Cu(2+)-binding residues include H90 and G93. Over residues 101 to 111 the composition is skewed to polar residues; that stretch reads YNPSSGGSYHN. C192 and C237 are joined by a disulfide. 3 N-linked (GlcNAc...) asparagine glycosylation sites follow: N194, N209, and N218. Residue S248 is the site of GPI-anchor amidated serine attachment. The propeptide at 249-273 is removed in mature form; sequence GIQLHPADTWLAVLLLLLTTLFAMH.

The protein belongs to the prion family. In terms of assembly, monomer and homodimer. Has a tendency to aggregate into amyloid fibrils containing a cross-beta spine, formed by a steric zipper of superposed beta-strands. Soluble oligomers may represent an intermediate stage on the path to fibril formation. Copper binding may promote oligomerization. In terms of tissue distribution, spinal cord and brain.

The protein localises to the cell membrane. Functionally, its primary physiological function is unclear. Has cytoprotective activity against internal or environmental stresses. May play a role in neuronal development and synaptic plasticity. May be required for neuronal myelin sheath maintenance. May play a role in iron uptake and iron homeostasis. Soluble oligomers are toxic to cultured neuroblastoma cells and induce apoptosis (in vitro). Association with GPC1 (via its heparan sulfate chains) targets PRNP to lipid rafts. Also provides Cu(2+) or Zn(2+) for the ascorbate-mediated GPC1 deaminase degradation of its heparan sulfate side chains. In Gallus gallus (Chicken), this protein is Major prion protein homolog (PRNP).